Reading from the N-terminus, the 556-residue chain is Man(5)GlcNAc(2)-PP-dolichol translocation protein RFT1 (556 aa).

The next 12 membrane-spanning stretches (helical) occupy residues 10–30 (LLGAGFSIIFQILCRILTFGI), 41–61 (EVLGIMNVRLLLLESTLLFLS), 91–111 (LTVPICAVLCAPCLYIWLNWL), 129–149 (VAFSCVLELMAESAVFVAQVF), 156–176 (ILLNTLHILVRSAIFLWIVTG), 184–204 (AFAIAQLSSAVTIVLGQYGFF), 353–373 (SVLNNLLLGVSSIGLIAFTFG), 389–409 (FVAGGLPQSLLQWHCLAIYLL), 440–460 (VSFLVLSYILTGIFGPVGFIF), 461–477 (ANCINMLSRILYSTYYI), 489–509 (LLGLWPGKLFGCTLFLAGIVC), and 517–537 (LATHLGVGVLAGLACLLSWAL).

The protein belongs to the RFT1 family.

The protein resides in the endoplasmic reticulum membrane. Its pathway is protein modification; protein glycosylation. Intramembrane glycolipid transporter that operates in the biosynthetic pathway of dolichol-linked oligosaccharides, the glycan precursors employed in protein asparagine (N)-glycosylation. The sequential addition of sugars to dolichol pyrophosphate produces dolichol-linked oligosaccharides containing fourteen sugars, including two GlcNAcs, nine mannoses and three glucoses. Once assembled, the oligosaccharide is transferred from the lipid to nascent proteins by oligosaccharyltransferases. The assembly of dolichol-linked oligosaccharides begins on the cytosolic side of the endoplasmic reticulum membrane and finishes in its lumen. RFT1 could mediate the translocation of the cytosolically oriented intermediate DolPP-GlcNAc2Man5, produced by ALG11, into the ER lumen where dolichol-linked oligosaccharides assembly continues. However, the intramembrane lipid transporter activity could not be confirmed in vitro. This Drosophila melanogaster (Fruit fly) protein is Man(5)GlcNAc(2)-PP-dolichol translocation protein RFT1.